The primary structure comprises 250 residues: 2,3-bisphosphoglycerate-dependent phosphoglycerate mutase (250 aa).

Substrate is bound by residues 10–17, 23–24, Arg-62, 89–92, Lys-100, 116–117, and 185–186; these read RHGESQWN, TG, ERHY, RR, and GN. The active-site Tele-phosphohistidine intermediate is His-11. Residue Glu-89 is the Proton donor/acceptor of the active site.

The protein belongs to the phosphoglycerate mutase family. BPG-dependent PGAM subfamily. Homodimer.

It catalyses the reaction (2R)-2-phosphoglycerate = (2R)-3-phosphoglycerate. It participates in carbohydrate degradation; glycolysis; pyruvate from D-glyceraldehyde 3-phosphate: step 3/5. Functionally, catalyzes the interconversion of 2-phosphoglycerate and 3-phosphoglycerate. The chain is 2,3-bisphosphoglycerate-dependent phosphoglycerate mutase from Sodalis glossinidius (strain morsitans).